Here is a 411-residue protein sequence, read N- to C-terminus: Putative ion-transport protein YfeO (411 aa).

The next 11 helical transmembrane spans lie at M9–A29, D54–I74, A99–P119, I149–I169, L186–P206, I223–C243, V258–L278, L296–A316, G322–H342, V343–V363, and L386–A406.

The protein belongs to the chloride channel (TC 2.A.49) family.

The protein resides in the cell membrane. In Salmonella schwarzengrund (strain CVM19633), this protein is Putative ion-transport protein YfeO.